The following is a 268-amino-acid chain: MKISIVIVTYNRIPALCELLESISRQTLMPYEIIIVNDAGESVVPVKALYPELPIAVINLEKNSGHVAARNAGVKEASGDCIMLCDDDDFFTPGHIEKMAKEIETADFVHSDAEIVSFEEKNGTRYPVSRKLFAYTADYEDMRVFSTYVPSGSMYRRFLHDEIGYFDADVHNYWDWDFYLRAAKDYRVKRVPCASVIYAFSDAGDNQSADLGAKRKQYLDRLSEKHGLGELPTKNFAVLLEEPEMKRREAKSEMVWDGEPVYSRLHRS.

Belongs to the glycosyltransferase 2 family.

This is an uncharacterized protein from Bacillus subtilis (strain 168).